Consider the following 427-residue polypeptide: Septin-8-A (427 aa).

Residues 39–305 (QGFCFNILCV…ELYRRCKLEE (267 aa)) form the Septin-type G domain. Residues 49–56 (GETGIGKS) form a G1 motif region. GTP-binding positions include 49–56 (GETGIGKS), Gly104, 185–193 (KADTISKSE), Gly239, and Arg254. Positions 101–104 (DTVG) are G3 motif. Residues 184–187 (AKAD) form a G4 motif region. Residues 320 to 409 (LQETYEAKRK…KAAMEALQSQ (90 aa)) adopt a coiled-coil conformation. The span at 376 to 389 (QEESKKVEDKRRDL) shows a compositional bias: basic and acidic residues. A disordered region spans residues 376–427 (QEESKKVEDKRRDLEEEMNSFNRRKAAMEALQSQSFQATSQQPLKKDKDRKN). The segment covering 406 to 418 (LQSQSFQATSQQP) has biased composition (polar residues).

The protein belongs to the TRAFAC class TrmE-Era-EngA-EngB-Septin-like GTPase superfamily. Septin GTPase family.

This chain is Septin-8-A (sept8-a), found in Xenopus laevis (African clawed frog).